Reading from the N-terminus, the 50-residue chain is Protein HokA (50 aa).

Residues 7–24 (LLSLIVICFTLLFFTWMI) traverse the membrane as a helical segment.

It belongs to the Hok/Gef family.

The protein localises to the cell inner membrane. Functionally, toxic component of a type I toxin-antitoxin (TA) system. When overexpressed kills cells within minutes; causes collapse of the transmembrane potential and arrest of respiration. Its toxic effect is probably neutralized by antisense antitoxin RNA SokA. The polypeptide is Protein HokA (Escherichia coli (strain K12)).